Reading from the N-terminus, the 142-residue chain is Transcription antitermination protein NusB (142 aa).

The protein belongs to the NusB family.

In terms of biological role, involved in transcription antitermination. Required for transcription of ribosomal RNA (rRNA) genes. Binds specifically to the boxA antiterminator sequence of the ribosomal RNA (rrn) operons. The sequence is that of Transcription antitermination protein NusB from Persephonella marina (strain DSM 14350 / EX-H1).